Here is a 642-residue protein sequence, read N- to C-terminus: G protein-coupled receptor kinase 1 (642 aa).

The segment at 1–202 is N-terminal; sequence MEIENIVANT…LEKRPVDKHT (202 aa). An RGS domain is found at 52–188; that stretch reads YAFVVEKQPI…AESMYFHRFL (137 aa). The 268-residue stretch at 203–470 folds into the Protein kinase domain; it reads FRLYRVLGKG…AEEIRAHPFF (268 aa). ATP is bound by residues 209–217 and lysine 232; that span reads LGKGGFGEV. Aspartate 328 functions as the Proton acceptor in the catalytic mechanism. The AGC-kinase C-terminal domain maps to 480–545; sequence EPVPWKKMEA…GCVSIPWQSE (66 aa). A disordered region spans residues 612-642; it reads VEQQQPPKTSTQTPAVRSSRAASASGRTLVI. The segment covering 614-636 has biased composition (low complexity); the sequence is QQQPPKTSTQTPAVRSSRAASAS.

The protein belongs to the protein kinase superfamily. AGC Ser/Thr protein kinase family. GPRK subfamily.

It catalyses the reaction [G-protein-coupled receptor] + ATP = [G-protein-coupled receptor]-phosphate + ADP + H(+). Its function is as follows. Specifically phosphorylates the activated forms of G protein-coupled receptors. The protein is G protein-coupled receptor kinase 1 (grk-1) of Caenorhabditis elegans.